Here is a 238-residue protein sequence, read N- to C-terminus: MNKAILAVAMVLLLAGCATKPEEIGRAPDLSPVAAHLGMQNNPQFNGYPARPGKASYSLWDQRSTNFFKDPRAATPGDVLTVIISINDRANLDNKTDRERVSKGIYGGGGSFATSSITGAAAGGDMDASVNTHSDSKSKGKGTIERSEDIRLQIAAIVTDTLPNGNLIIRGSQEVRVNNELRVLNVAGVVRPRDISGNNTISYDKIAEARISYGGRGRLSEIQQPPYGQQILDQFSPF.

Residues 1–16 (MNKAILAVAMVLLLAG) form the signal peptide. A lipid anchor (N-palmitoyl cysteine) is attached at Cys17. Cys17 is lipidated: S-diacylglycerol cysteine.

This sequence belongs to the FlgH family. In terms of assembly, the basal body constitutes a major portion of the flagellar organelle and consists of four rings (L,P,S, and M) mounted on a central rod.

The protein localises to the cell outer membrane. Its subcellular location is the bacterial flagellum basal body. Its function is as follows. Assembles around the rod to form the L-ring and probably protects the motor/basal body from shearing forces during rotation. This Brucella abortus (strain 2308) protein is Flagellar L-ring protein.